Here is a 308-residue protein sequence, read N- to C-terminus: Cyclin-D2-1 (308 aa).

Residues 286-308 (EGLSYDSSSPPPPKRRKRSPPGT) form a disordered region. Over residues 298–308 (PKRRKRSPPGT) the composition is skewed to basic residues.

This sequence belongs to the cyclin family. Cyclin D subfamily.

In Oryza sativa subsp. japonica (Rice), this protein is Cyclin-D2-1 (CYCD2-1).